A 737-amino-acid polypeptide reads, in one-letter code: Polyribonucleotide nucleotidyltransferase (737 aa).

Mg(2+) contacts are provided by Asp514 and Asp520. The region spanning 580 to 639 (PRIITVKIPVDKIGEVIGPKGKMINQIQEDTGADITIEDDGTIYIGAQAGSQAEAARATI) is the KH domain. Residues 651-723 (GERYLGTVVK…SRGKLSLIPV (73 aa)) form the S1 motif domain.

The protein belongs to the polyribonucleotide nucleotidyltransferase family. It depends on Mg(2+) as a cofactor.

The protein localises to the cytoplasm. The enzyme catalyses RNA(n+1) + phosphate = RNA(n) + a ribonucleoside 5'-diphosphate. Involved in mRNA degradation. Catalyzes the phosphorolysis of single-stranded polyribonucleotides processively in the 3'- to 5'-direction. In Streptomyces griseus subsp. griseus (strain JCM 4626 / CBS 651.72 / NBRC 13350 / KCC S-0626 / ISP 5235), this protein is Polyribonucleotide nucleotidyltransferase.